Consider the following 96-residue polypeptide: ESAT-6-like protein EsxR (96 aa).

Belongs to the WXG100 family. ESAT-6 subfamily.

It localises to the secreted. In Mycobacterium bovis (strain ATCC BAA-935 / AF2122/97), this protein is ESAT-6-like protein EsxR.